Reading from the N-terminus, the 144-residue chain is Large ribosomal subunit protein uL15 (144 aa).

A disordered region spans residues 1–51; that stretch reads MKLNELKPATGSRSKRLRKGRGLSSGHGFTSGRGTKGQKAHGKTRLGFEGG. A compositionally biased stretch (gly residues) spans 23–35; the sequence is LSSGHGFTSGRGT.

This sequence belongs to the universal ribosomal protein uL15 family. Part of the 50S ribosomal subunit.

Functionally, binds to the 23S rRNA. This Limosilactobacillus reuteri (strain DSM 20016) (Lactobacillus reuteri) protein is Large ribosomal subunit protein uL15.